Here is a 344-residue protein sequence, read N- to C-terminus: L-rhamnose-proton symporter (344 aa).

10 helical membrane-spanning segments follow: residues 4 to 24, 38 to 58, 68 to 88, 101 to 121, 137 to 157, 175 to 195, 214 to 234, 259 to 279, 290 to 310, and 323 to 343; these read AITMGIFWHLIGAASAACFYA, WSVGGIVSWIILPWAISALLL, FSLSTLLPVFLFGAMWGIGNI, MGIGIAIGITLIVGTLMTPII, TLLGVLVALIGVGIVTRAGQL, LVLAVMCGIFSAGMSFAMNAA, LPSYVIIMGGGAIINLGFCFI, VLLSALGGLMWYLQFFFYAWG, ISWMLHMSFYVLCGGIVGLVL, and VLSLGCVVIIVAANIVGIGMA.

It belongs to the L-rhamnose transporter (TC 2.A.7.6) family.

The protein localises to the cell inner membrane. The enzyme catalyses L-rhamnopyranose(in) + H(+)(in) = L-rhamnopyranose(out) + H(+)(out). In terms of biological role, uptake of L-rhamnose across the cytoplasmic membrane with the concomitant transport of protons into the cell (symport system). The protein is L-rhamnose-proton symporter of Shigella boydii serotype 18 (strain CDC 3083-94 / BS512).